Reading from the N-terminus, the 274-residue chain is Rhamnulose-1-phosphate aldolase (274 aa).

E117 is an active-site residue. Zn(2+) is bound by residues H141, H143, and H212.

This sequence belongs to the aldolase class II family. RhaD subfamily. In terms of assembly, homotetramer. Zn(2+) serves as cofactor.

It is found in the cytoplasm. It carries out the reaction L-rhamnulose 1-phosphate = (S)-lactaldehyde + dihydroxyacetone phosphate. The protein operates within carbohydrate degradation; L-rhamnose degradation; glycerone phosphate from L-rhamnose: step 3/3. In terms of biological role, catalyzes the reversible cleavage of L-rhamnulose-1-phosphate to dihydroxyacetone phosphate (DHAP) and L-lactaldehyde. This Yersinia pseudotuberculosis serotype IB (strain PB1/+) protein is Rhamnulose-1-phosphate aldolase.